The sequence spans 247 residues: tRNA pseudouridine synthase A (247 aa).

Aspartate 53 functions as the Nucleophile in the catalytic mechanism. Position 112 (tyrosine 112) interacts with substrate.

It belongs to the tRNA pseudouridine synthase TruA family. As to quaternary structure, homodimer.

The enzyme catalyses uridine(38/39/40) in tRNA = pseudouridine(38/39/40) in tRNA. In terms of biological role, formation of pseudouridine at positions 38, 39 and 40 in the anticodon stem and loop of transfer RNAs. This Anaplasma marginale (strain Florida) protein is tRNA pseudouridine synthase A.